A 466-amino-acid chain; its full sequence is Amino acid permease 4 (466 aa).

The Cytoplasmic segment spans residues 1 to 22; that stretch reads MDVPRPAFKCFDDDGRLKRSGT. The next 2 helical transmembrane spans lie at 23-43 and 44-64; these read VWTA…LSLA and WAIG…FSFV. The Cytoplasmic segment spans residues 65–111; sequence TYYSSTLLSDCYRTGDPVSGKRNYTYMDAVRSILGGFRFKICGLIQY. The chain crosses the membrane as a helical span at residues 112–132; that stretch reads LNLFGITVGYTIAASISMMAI. At 133-177 the chain is on the extracellular side; it reads KRSNCFHESGGKNPCHMSSNPYMIMFGVTEILLSQIKDFDQIWWL. Residues 178 to 198 form a helical membrane-spanning segment; the sequence is SIVAAIMSFTYSAIGLALGII. At 199 to 226 the chain is on the cytoplasmic side; that stretch reads QVAANGVVKGSLTGISIGAVTQTQKIWR. The helical transmembrane segment at 227–247 threads the bilayer; the sequence is TFQALGDIAFAYSYSVVLIEI. The Extracellular portion of the chain corresponds to 248 to 266; that stretch reads QDTVRSPPAESKTMKIATR. A helical transmembrane segment spans residues 267-287; the sequence is ISIAVTTTFYMLCGCMGYAAF. Residues 288-290 are Cytoplasmic-facing; that stretch reads GDK. A helical membrane pass occupies residues 291–311; that stretch reads APGNLLTGFGFYNPFWLLDVA. Residues 312–313 are Extracellular-facing; it reads NA. The helical transmembrane segment at 314–334 threads the bilayer; the sequence is AIVIHLVGAYQVFAQPIFAFI. The Cytoplasmic segment spans residues 335–369; the sequence is EKQAAARFPDSDLVTKEYEIRIPGFRSPYKVNVFR. Residues 370-390 form a helical membrane-spanning segment; that stretch reads AVYRSGFVVLTTVISMLMPFF. Topologically, residues 391 to 392 are extracellular; the sequence is ND. The chain crosses the membrane as a helical span at residues 393 to 413; the sequence is VVGILGALGFWPLTVYFPVEM. Over 414 to 435 the chain is Cytoplasmic; sequence YIRQRKVERWSMKWVCLQMLSC. The chain crosses the membrane as a helical span at residues 436 to 456; the sequence is GCLMITLVAGVGSIAGVMLDL. Residues 457–466 are Extracellular-facing; that stretch reads KVYKPFKTTY.

The protein belongs to the amino acid/polyamine transporter 2 family. Amino acid/auxin permease (AAAP) (TC 2.A.18.2) subfamily. Expressed in leaves, stems and flowers.

The protein localises to the cell membrane. Its activity is regulated as follows. Inhibited by 2,4-dinitrophenol. Amino acid-proton symporter. Stereospecific transporter with a broad specificity for neutral amino acids, favoring small amino acids such as alanine, asparagine and glutamine. Also accepts large aromatic residues such as in phenlalanine or tyrosine. The chain is Amino acid permease 4 (AAP4) from Arabidopsis thaliana (Mouse-ear cress).